A 205-amino-acid polypeptide reads, in one-letter code: Small ribosomal subunit protein uS4 (205 aa).

The interval 26-46 is disordered; sequence PVNRREYGPGQHGQRRKQKPS. An S4 RNA-binding domain is found at 94–157; sequence RRLDAVVYRL…KQLAIVLDAV (64 aa).

The protein belongs to the universal ribosomal protein uS4 family. In terms of assembly, part of the 30S ribosomal subunit. Contacts protein S5. The interaction surface between S4 and S5 is involved in control of translational fidelity.

Functionally, one of the primary rRNA binding proteins, it binds directly to 16S rRNA where it nucleates assembly of the body of the 30S subunit. In terms of biological role, with S5 and S12 plays an important role in translational accuracy. The sequence is that of Small ribosomal subunit protein uS4 from Gluconobacter oxydans (strain 621H) (Gluconobacter suboxydans).